The chain runs to 349 residues: Anthranilate phosphoribosyltransferase (349 aa).

Residues glycine 82, 85-86 (GD), 92-95 (NVST), 110-118 (KHGNRAVSG), and serine 122 contribute to the 5-phospho-alpha-D-ribose 1-diphosphate site. Residue glycine 82 participates in anthranilate binding. Residue serine 94 participates in Mg(2+) binding. Asparagine 113 serves as a coordination point for anthranilate. Arginine 168 is a binding site for anthranilate. Positions 227 and 228 each coordinate Mg(2+).

It belongs to the anthranilate phosphoribosyltransferase family. As to quaternary structure, homodimer. The cofactor is Mg(2+).

It catalyses the reaction N-(5-phospho-beta-D-ribosyl)anthranilate + diphosphate = 5-phospho-alpha-D-ribose 1-diphosphate + anthranilate. It functions in the pathway amino-acid biosynthesis; L-tryptophan biosynthesis; L-tryptophan from chorismate: step 2/5. In terms of biological role, catalyzes the transfer of the phosphoribosyl group of 5-phosphorylribose-1-pyrophosphate (PRPP) to anthranilate to yield N-(5'-phosphoribosyl)-anthranilate (PRA). This is Anthranilate phosphoribosyltransferase from Pseudomonas putida (Arthrobacter siderocapsulatus).